We begin with the raw amino-acid sequence, 362 residues long: Protein indeterminate-domain 16 (362 aa).

Positions 1 to 22 (MELTQPIRENGDPQGHQLTDPD) are disordered. 2 C2H2-type zinc fingers span residues 39–61 (YVCE…RRRH) and 82–112 (YVCP…RRKH). A CCHC-type 1; atypical zinc finger spans residues 118–142 (WVCERCSKGYAVQSDYKAHLKTCGS). Residues C120, C123, H136, C140, C147, C149, H162, and C166 each contribute to the Zn(2+) site. The segment at 145–168 (HSCDCGRVFSRVESFIEHQDTCTI) adopts a CCHC-type 2; atypical zinc-finger fold. The segment at 155–167 (RVESFIEHQDTCT) is SHR-binding. A disordered region spans residues 247–278 (SAQARHNEKRETSLTKERANEEARKAEETRQE). Residues 251 to 278 (RHNEKRETSLTKERANEEARKAEETRQE) show a composition bias toward basic and acidic residues. Positions 252–319 (HNEKRETSLT…VREEAIKRIN (68 aa)) form a coiled coil.

Highly expressed in leaves, hypocotyls, roots, vasculature of cotyledons, floral organs and in the endodermis and vasculaturenof inflorescence stems.

Its subcellular location is the nucleus. Transcription factor regulating lateral organ morphogenesis and gravitropic responses. Has a redundant role with IDD14 in directing leaf and floral organ morphogenesis. Acts cooperatively with IDD15 to control silique and branche orientation. Involved in the establishment of auxin gradients through the regulation of auxin biosynthesis and transport. This is Protein indeterminate-domain 16 from Arabidopsis thaliana (Mouse-ear cress).